Consider the following 368-residue polypeptide: S-adenosylmethionine decarboxylase proenzyme (368 aa).

Active-site residues include Glu26 and Glu29. The Schiff-base intermediate with substrate; via pyruvic acid role is filled by Ser83. A Pyruvic acid (Ser); by autocatalysis modification is found at Ser83. The Proton donor; for catalytic activity role is filled by Cys97. Catalysis depends on proton acceptor; for processing activity residues Ser246 and His261.

Belongs to the eukaryotic AdoMetDC family. In terms of assembly, heterotetramer of two alpha and two beta chains. It depends on pyruvate as a cofactor. Post-translationally, is synthesized initially as an inactive proenzyme. Formation of the active enzyme involves a self-maturation process in which the active site pyruvoyl group is generated from an internal serine residue via an autocatalytic post-translational modification. Two non-identical subunits are generated from the proenzyme in this reaction, and the pyruvate is formed at the N-terminus of the alpha chain, which is derived from the carboxyl end of the proenzyme. The post-translation cleavage follows an unusual pathway, termed non-hydrolytic serinolysis, in which the side chain hydroxyl group of the serine supplies its oxygen atom to form the C-terminus of the beta chain, while the remainder of the serine residue undergoes an oxidative deamination to produce ammonia and the pyruvoyl group blocking the N-terminus of the alpha chain.

The enzyme catalyses S-adenosyl-L-methionine + H(+) = S-adenosyl 3-(methylsulfanyl)propylamine + CO2. It participates in amine and polyamine biosynthesis; S-adenosylmethioninamine biosynthesis; S-adenosylmethioninamine from S-adenosyl-L-methionine: step 1/1. Functionally, essential for biosynthesis of the polyamines spermidine and spermine. Polyamines are essential for cell proliferation and are implicated in cellular processes, ranging from DNA replication to apoptosis. The chain is S-adenosylmethionine decarboxylase proenzyme from Caenorhabditis elegans.